The following is a 409-amino-acid chain: Proteasome-activating nucleotidase (409 aa).

The interval 1 to 22 (MTLSSAGGSRSHRHNGGHSERD) is disordered. Positions 23–58 (VEIRILKDKVRSLTKEKISLQKELEYYKNEITKLLS) form a coiled coil. Residues 183 to 188 (GTGKTL) and histidine 322 contribute to the ATP site.

Belongs to the AAA ATPase family. Homohexamer. The hexameric complex has a two-ring architecture resembling a top hat that caps the 20S proteasome core at one or both ends. Upon ATP-binding, the C-terminus of PAN interacts with the alpha-rings of the proteasome core by binding to the intersubunit pockets.

The protein resides in the cytoplasm. ATPase which is responsible for recognizing, binding, unfolding and translocation of substrate proteins into the archaeal 20S proteasome core particle. Is essential for opening the gate of the 20S proteasome via an interaction with its C-terminus, thereby allowing substrate entry and access to the site of proteolysis. Thus, the C-termini of the proteasomal ATPase function like a 'key in a lock' to induce gate opening and therefore regulate proteolysis. Unfolding activity requires energy from ATP hydrolysis, whereas ATP binding alone promotes ATPase-20S proteasome association which triggers gate opening, and supports translocation of unfolded substrates. The protein is Proteasome-activating nucleotidase of Aeropyrum pernix (strain ATCC 700893 / DSM 11879 / JCM 9820 / NBRC 100138 / K1).